The following is a 376-amino-acid chain: Protein XRP2 (376 aa).

Positions 1–55 are disordered; that stretch reads MGCFFSKKSRRKSPKKDAALPTGDESATGNDLAETNNTALGSNSNQEAPKQYSWD. Residue Gly-2 is the site of N-myristoyl glycine attachment. Cys-3 carries S-palmitoyl cysteine lipidation. The span at 25-48 shows a compositional bias: polar residues; the sequence is ESATGNDLAETNNTALGSNSNQEA. Positions 49–204 constitute a C-CAP/cofactor C-like domain; the sequence is PKQYSWDKRE…NWSNIHDFTP (156 aa). Residues 123–124 and 140–143 contribute to the GTP site; these read GS and QQFR.

It belongs to the TBCC family. In terms of processing, myristoylated on Gly-2; which may be required for membrane targeting. Post-translationally, palmitoylated on Cys-3; which may be required for plasma membrane targeting. In terms of tissue distribution, in the retina, detected in both rod and cone photoreceptors (at protein level). Has strongest expression in the retinal outer nuclear layer (ONL) and weaker expression in the outer plexiform layer (OPL) and inner plexiform layer (IPL) (at protein level). Expressed in all tissues tested.

It is found in the cell membrane. Its subcellular location is the cell projection. The protein localises to the cilium. In terms of biological role, acts as a GTPase-activating protein (GAP) involved in trafficking between the Golgi and the ciliary membrane. Acts as a GTPase-activating protein (GAP) for tubulin in concert with tubulin-specific chaperone C, but does not enhance tubulin heterodimerization. In the retina, required for maintenance of rod and cone photoreceptor cells. May have a role in normal retinal localization of the transducins GNB1 and GNAT1, and the rhodopsin kinase GRK1. This chain is Protein XRP2, found in Danio rerio (Zebrafish).